Here is a 102-residue protein sequence, read N- to C-terminus: NADH-quinone oxidoreductase subunit K (102 aa).

Transmembrane regions (helical) follow at residues 5-25, 31-51, and 66-86; these read ITHYLTVSALMFTIGIAGIFL, IIILMSIELILLSVNINFVAF, and FVLTVAAAEAAIGLAILVVFF.

It belongs to the complex I subunit 4L family. In terms of assembly, NDH-1 is composed of 14 different subunits. Subunits NuoA, H, J, K, L, M, N constitute the membrane sector of the complex.

The protein resides in the cell inner membrane. It catalyses the reaction a quinone + NADH + 5 H(+)(in) = a quinol + NAD(+) + 4 H(+)(out). Its function is as follows. NDH-1 shuttles electrons from NADH, via FMN and iron-sulfur (Fe-S) centers, to quinones in the respiratory chain. The immediate electron acceptor for the enzyme in this species is believed to be ubiquinone. Couples the redox reaction to proton translocation (for every two electrons transferred, four hydrogen ions are translocated across the cytoplasmic membrane), and thus conserves the redox energy in a proton gradient. This chain is NADH-quinone oxidoreductase subunit K, found in Bartonella tribocorum (strain CIP 105476 / IBS 506).